Consider the following 136-residue polypeptide: Prefoldin subunit alpha (136 aa).

This sequence belongs to the prefoldin subunit alpha family. As to quaternary structure, heterohexamer of two alpha and four beta subunits.

It localises to the cytoplasm. Functionally, molecular chaperone capable of stabilizing a range of proteins. Seems to fulfill an ATP-independent, HSP70-like function in archaeal de novo protein folding. The polypeptide is Prefoldin subunit alpha (Pyrobaculum arsenaticum (strain DSM 13514 / JCM 11321 / PZ6)).